The chain runs to 370 residues: Peridinin-chlorophyll a-binding protein 1, chloroplastic (370 aa).

The N-terminal 57 residues, 1–57, are a transit peptide targeting the chloroplast; that stretch reads MVRSGKKAVVLAAVAFCATSVVQKSHGFVPSPLRQRAAAAGAAAASAATMFAPAAFA. 2 consecutive repeat copies span residues 58-220 and 221-370.

Homotrimer.

The protein localises to the plastid. The protein resides in the chloroplast. Functionally, water-soluble antenna for capture of solar energy in the blue-green range. Peridinin is an asymmetric carotenoid. This chain is Peridinin-chlorophyll a-binding protein 1, chloroplastic, found in Amphidinium carterae (Dinoflagellate).